Here is a 154-residue protein sequence, read N- to C-terminus: Xanthine-guanine phosphoribosyltransferase (154 aa).

5-phospho-alpha-D-ribose 1-diphosphate is bound by residues 37 to 38 (RG), Arg69, and 88 to 96 (EDLVDSGDT). Position 69 (Arg69) interacts with GMP. Asp89 contributes to the Mg(2+) binding site. Guanine is bound by residues Asp92 and Ile135. Xanthine contacts are provided by Asp92 and Ile135. Residues 92–96 (DSGDT) and 134–135 (WI) contribute to the GMP site.

Belongs to the purine/pyrimidine phosphoribosyltransferase family. XGPT subfamily. In terms of assembly, homotetramer. Requires Mg(2+) as cofactor.

It localises to the cell inner membrane. It catalyses the reaction GMP + diphosphate = guanine + 5-phospho-alpha-D-ribose 1-diphosphate. The catalysed reaction is XMP + diphosphate = xanthine + 5-phospho-alpha-D-ribose 1-diphosphate. It carries out the reaction IMP + diphosphate = hypoxanthine + 5-phospho-alpha-D-ribose 1-diphosphate. Its pathway is purine metabolism; GMP biosynthesis via salvage pathway; GMP from guanine: step 1/1. It participates in purine metabolism; XMP biosynthesis via salvage pathway; XMP from xanthine: step 1/1. Its function is as follows. Purine salvage pathway enzyme that catalyzes the transfer of the ribosyl-5-phosphate group from 5-phospho-alpha-D-ribose 1-diphosphate (PRPP) to the N9 position of the 6-oxopurines guanine and xanthine to form the corresponding ribonucleotides GMP (guanosine 5'-monophosphate) and XMP (xanthosine 5'-monophosphate), with the release of PPi. To a lesser extent, also acts on hypoxanthine. This Vibrio campbellii (strain ATCC BAA-1116) protein is Xanthine-guanine phosphoribosyltransferase.